The following is a 283-amino-acid chain: Aquaporin PIP2-5 (283 aa).

2 consecutive transmembrane segments (helical) span residues 37-57 and 74-94; these read AVIAEFVATLLFLYVTVATVI and CGGVGVLGIAWAFGGMIFILV. An NPA 1 motif is present at residues 106-108; the sequence is NPA. Transmembrane regions (helical) follow at residues 125 to 145, 167 to 187, and 199 to 219; these read ILYIVAQCLGAVCGVALVKGF, GTGLAAEIIGTFVLVYTVFSA, and VPVLAPLPIGFAVFMVHLATI. Residues 227 to 229 carry the NPA 2 motif; that stretch reads NPA. Residues 249-269 form a helical membrane-spanning segment; that stretch reads IFWVGPFIGAAIAALYHQIVL.

Belongs to the MIP/aquaporin (TC 1.A.8) family. PIP (TC 1.A.8.11) subfamily. As to expression, expressed in roots.

The protein resides in the cell membrane. Water channel required to facilitate the transport of water across cell membrane. May play a role in root water uptake. The polypeptide is Aquaporin PIP2-5 (PIP2-5) (Oryza sativa subsp. japonica (Rice)).